The chain runs to 421 residues: MCLRFFSPVPGSTSSATNVTMVVSAGPWSSEKAEMNILEINEKLRPQLAENKQQFRNMKQKFLVTQMAGFLANQQNKYKYEECKDLIKSMLREELQFKEEKLAEQLKQAEELRQYKVLVHSQERELIQLREKLREGRDASHSLNQHLQALLTPDKHDNSQGQDFREQLAEGCRLARHLVHKLSPENDTDEDENDKTKELDKVQESPAPREEQKAEEKEVPEDSLEECAITYSNSHGPSDSNPPHKNIKITSEEDKVNSILVVDSESSQDEWQDALNILLENQNDDEEEEGKAPVPPQVTLWICGLKLQESEEKEVLQDSPEERVTTSCSDHDVSQSYQPCEGTFLALVEQKVCSAQDVASEHSNSKGEETPLGFPDTKYCWKDEKDERMSQKVAFLLDEKNYNSKPSSIPNTTLQGSFTED.

Positions 87 to 143 (IKSMLREELQFKEEKLAEQLKQAEELRQYKVLVHSQERELIQLREKLREGRDASHSL) form a coiled coil. Disordered regions lie at residues 179 to 251 (VHKL…KITS), 312 to 334 (EKEV…HDVS), and 402 to 421 (YNSK…FTED). 2 Olduvai domains span residues 190–279 (EDEN…NILL) and 280–391 (ENQN…RMSQ). Over residues 194-217 (DKTKELDKVQESPAPREEQKAEEK) the composition is skewed to basic and acidic residues. Over residues 230-243 (TYSNSHGPSDSNPP) the composition is skewed to polar residues. Residues 312–333 (EKEVLQDSPEERVTTSCSDHDV) are compositionally biased toward basic and acidic residues. Polar residues predominate over residues 403 to 421 (NSKPSSIPNTTLQGSFTED).

Belongs to the NBPF family.

Its subcellular location is the cytoplasm. This Homo sapiens (Human) protein is Putative NBPF family member NBPF7.